Reading from the N-terminus, the 267-residue chain is Flap endonuclease Xni (267 aa).

Aspartate 115 contributes to the Mg(2+) binding site. One can recognise a 5'-3' exonuclease domain in the interval valine 171–tyrosine 261. K(+) is bound by residues leucine 182, valine 193, and isoleucine 196. Positions glycine 195–threonine 200 are interaction with DNA.

It belongs to the Xni family. Requires Mg(2+) as cofactor. The cofactor is K(+).

Has flap endonuclease activity. During DNA replication, flap endonucleases cleave the 5'-overhanging flap structure that is generated by displacement synthesis when DNA polymerase encounters the 5'-end of a downstream Okazaki fragment. The protein is Flap endonuclease Xni of Aeromonas hydrophila subsp. hydrophila (strain ATCC 7966 / DSM 30187 / BCRC 13018 / CCUG 14551 / JCM 1027 / KCTC 2358 / NCIMB 9240 / NCTC 8049).